A 345-amino-acid chain; its full sequence is Dihydroorotate dehydrogenase (quinone) (345 aa).

FMN-binding positions include 65 to 69 (AGLDK) and Thr-89. Lys-69 serves as a coordination point for substrate. 114–118 (NRMGF) serves as a coordination point for substrate. FMN contacts are provided by Asn-142 and Asn-175. Substrate is bound at residue Asn-175. Residue Ser-178 is the Nucleophile of the active site. Asn-180 is a binding site for substrate. FMN is bound by residues Lys-220 and Thr-248. 249–250 (NT) lines the substrate pocket. FMN-binding positions include Gly-271, Gly-300, and 321 to 322 (YT).

It belongs to the dihydroorotate dehydrogenase family. Type 2 subfamily. As to quaternary structure, monomer. It depends on FMN as a cofactor.

Its subcellular location is the cell membrane. It carries out the reaction (S)-dihydroorotate + a quinone = orotate + a quinol. Its pathway is pyrimidine metabolism; UMP biosynthesis via de novo pathway; orotate from (S)-dihydroorotate (quinone route): step 1/1. In terms of biological role, catalyzes the conversion of dihydroorotate to orotate with quinone as electron acceptor. This chain is Dihydroorotate dehydrogenase (quinone), found in Burkholderia cenocepacia (strain ATCC BAA-245 / DSM 16553 / LMG 16656 / NCTC 13227 / J2315 / CF5610) (Burkholderia cepacia (strain J2315)).